The following is a 132-amino-acid chain: MNMRPDTCSVLVLLLMLRRNNGDSVTQTEGLVTLTEGLPVMLNCTYQSTYSPFLFWYVQHLNEAPKLLFKSFTDNKRPEHQGFHATLHKSSSSFHLQKSSAQLSDSALYYCALSNAGAKLTFGGGTRLTVRP.

The signal sequence occupies residues 1–22; the sequence is MNMRPDTCSVLVLLLMLRRNNG. Positions 23–114 are v segment; that stretch reads DSVTQTEGLV…DSALYYCALS (92 aa). An N-linked (GlcNAc...) asparagine glycan is attached at Asn-43. Cys-44 and Cys-111 are joined by a disulfide. Residues 115–132 form a j segment region; that stretch reads NAGAKLTFGGGTRLTVRP.

The polypeptide is T-cell receptor alpha chain V region CTL-F3 (Mus musculus (Mouse)).